A 217-amino-acid polypeptide reads, in one-letter code: Small ribosomal subunit protein uS3 (217 aa).

In terms of domain architecture, KH type-2 spans 38–106; the sequence is IRKFLKKRLS…KVTLDIQEVR (69 aa).

This sequence belongs to the universal ribosomal protein uS3 family. As to quaternary structure, part of the 30S ribosomal subunit. Forms a tight complex with proteins S10 and S14.

In terms of biological role, binds the lower part of the 30S subunit head. Binds mRNA in the 70S ribosome, positioning it for translation. This chain is Small ribosomal subunit protein uS3, found in Desulfotalea psychrophila (strain LSv54 / DSM 12343).